A 269-amino-acid polypeptide reads, in one-letter code: NAD kinase (269 aa).

The active-site Proton acceptor is the D45. NAD(+) contacts are provided by residues 45 to 46, 122 to 123, R149, D151, and A186; these read DG and NE.

Belongs to the NAD kinase family. Requires a divalent metal cation as cofactor.

The protein localises to the cytoplasm. The enzyme catalyses NAD(+) + ATP = ADP + NADP(+) + H(+). Functionally, involved in the regulation of the intracellular balance of NAD and NADP, and is a key enzyme in the biosynthesis of NADP. Catalyzes specifically the phosphorylation on 2'-hydroxyl of the adenosine moiety of NAD to yield NADP. The protein is NAD kinase of Staphylococcus haemolyticus (strain JCSC1435).